The primary structure comprises 47 residues: Defensin Tk-AMP-D1.1 (47 aa).

Cystine bridges form between cysteine 3-cysteine 47, cysteine 14-cysteine 34, cysteine 20-cysteine 41, and cysteine 24-cysteine 43.

Functionally, plant defense peptide. The protein is Defensin Tk-AMP-D1.1 of Triticum kiharae (Wheat).